We begin with the raw amino-acid sequence, 186 residues long: Ribosome-recycling factor (186 aa).

Belongs to the RRF family.

It localises to the cytoplasm. Responsible for the release of ribosomes from messenger RNA at the termination of protein biosynthesis. May increase the efficiency of translation by recycling ribosomes from one round of translation to another. This is Ribosome-recycling factor from Wolinella succinogenes (strain ATCC 29543 / DSM 1740 / CCUG 13145 / JCM 31913 / LMG 7466 / NCTC 11488 / FDC 602W) (Vibrio succinogenes).